The chain runs to 335 residues: MYPLARRILFALDAEKAHHFTLDALYTVYKLGLIPVTDNRTKPVKLMGMDLPNPVGLAAGLDKNGEYIDALGALGFGFIEIGTVTPKPQPGNPQPRLFRVPEHQGIINRMGFNNHGIDTMIRNIEKSKFSGVLGINIGKNAVTPIENAADDYLICLEKAYAHASYITVNISSPNTKNLRALQGGDELSALLEALKNKQAQLASVYGKYVPLAVKIAPDLDEAQIEDIAHVVKSVEMDGIIATNTTIDKSSLGSHPLAGEQGGLSGLPVHEKSNRVLKLLADHIDGKLPIIGVGGIMEGGDAADKIRLGATAVQVYSGLIYKGPALVKECLKALAR.

Residues 59–63 (AGLDK) and Thr83 each bind FMN. Residue Lys63 participates in substrate binding. 108-112 (NRMGF) is a substrate binding site. The FMN site is built by Asn136 and Asn169. Asn169 provides a ligand contact to substrate. The Nucleophile role is filled by Ser172. Asn174 lines the substrate pocket. 2 residues coordinate FMN: Lys214 and Thr242. A substrate-binding site is contributed by 243 to 244 (NT). Residues Gly265, Gly294, and 315-316 (YS) contribute to the FMN site.

The protein belongs to the dihydroorotate dehydrogenase family. Type 2 subfamily. As to quaternary structure, monomer. FMN is required as a cofactor.

It is found in the cell membrane. The catalysed reaction is (S)-dihydroorotate + a quinone = orotate + a quinol. The protein operates within pyrimidine metabolism; UMP biosynthesis via de novo pathway; orotate from (S)-dihydroorotate (quinone route): step 1/1. In terms of biological role, catalyzes the conversion of dihydroorotate to orotate with quinone as electron acceptor. This chain is Dihydroorotate dehydrogenase (quinone), found in Neisseria meningitidis serogroup A / serotype 4A (strain DSM 15465 / Z2491).